The primary structure comprises 362 residues: Histidinol-phosphate aminotransferase (362 aa).

Lysine 218 is subject to N6-(pyridoxal phosphate)lysine.

It belongs to the class-II pyridoxal-phosphate-dependent aminotransferase family. Histidinol-phosphate aminotransferase subfamily. Homodimer. Pyridoxal 5'-phosphate is required as a cofactor.

It catalyses the reaction L-histidinol phosphate + 2-oxoglutarate = 3-(imidazol-4-yl)-2-oxopropyl phosphate + L-glutamate. It functions in the pathway amino-acid biosynthesis; L-histidine biosynthesis; L-histidine from 5-phospho-alpha-D-ribose 1-diphosphate: step 7/9. In Xanthomonas campestris pv. campestris (strain B100), this protein is Histidinol-phosphate aminotransferase.